A 744-amino-acid chain; its full sequence is Protein zyg-11 homolog B (744 aa).

LRR repeat units lie at residues Leu185–Lys208, Met216–Leu236, and Lys237–Gln261.

It belongs to the zyg-11 family. In terms of assembly, interacts with ELOC/Elongin C. Part of an E3 ubiquitin ligase complex including ZYG11B, CUL2 and Elongin BC.

In terms of biological role, serves as substrate adapter subunit in the E3 ubiquitin ligase complex ZYG11B-CUL2-Elongin BC. Acts redudantly with ZER1 to target substrates bearing N-terminal glycine degrons for proteasomal degradation. Involved in the clearance of proteolytic fragments generated by caspase cleavage during apoptosis since N-terminal glycine degrons are strongly enriched at caspase cleavage sites. Also important in the quality control of protein N-myristoylation in which N-terminal glycine degrons are conditionally exposed after a failure of N-myristoylation. The chain is Protein zyg-11 homolog B from Mus musculus (Mouse).